Consider the following 280-residue polypeptide: Shikimate dehydrogenase (NADP(+)) (280 aa).

Shikimate-binding positions include 20–22 and threonine 67; that span reads TLS. Lysine 71 (proton acceptor) is an active-site residue. Shikimate is bound by residues asparagine 92 and aspartate 107. NADP(+)-binding positions include 131–135, 154–159, and leucine 224; these read GAGGA and NRTIDK. Position 226 (tyrosine 226) interacts with shikimate. Glycine 247 contacts NADP(+).

Belongs to the shikimate dehydrogenase family. As to quaternary structure, homodimer.

It carries out the reaction shikimate + NADP(+) = 3-dehydroshikimate + NADPH + H(+). Its pathway is metabolic intermediate biosynthesis; chorismate biosynthesis; chorismate from D-erythrose 4-phosphate and phosphoenolpyruvate: step 4/7. Involved in the biosynthesis of the chorismate, which leads to the biosynthesis of aromatic amino acids. Catalyzes the reversible NADPH linked reduction of 3-dehydroshikimate (DHSA) to yield shikimate (SA). This chain is Shikimate dehydrogenase (NADP(+)), found in Carboxydothermus hydrogenoformans (strain ATCC BAA-161 / DSM 6008 / Z-2901).